Here is a 537-residue protein sequence, read N- to C-terminus: Phosphoenolpyruvate carboxykinase (ATP) (537 aa).

Substrate-binding residues include arginine 61, tyrosine 195, and lysine 201. ATP is bound by residues lysine 201, histidine 220, and 236-244 (GLSGTGKTT). Residues lysine 201 and histidine 220 each coordinate Mn(2+). Residue aspartate 257 coordinates Mn(2+). ATP-binding residues include glutamate 285, arginine 323, and threonine 448. Residue arginine 323 participates in substrate binding.

It belongs to the phosphoenolpyruvate carboxykinase (ATP) family. The cofactor is Mn(2+).

It is found in the cytoplasm. The catalysed reaction is oxaloacetate + ATP = phosphoenolpyruvate + ADP + CO2. It functions in the pathway carbohydrate biosynthesis; gluconeogenesis. In terms of biological role, involved in the gluconeogenesis. Catalyzes the conversion of oxaloacetate (OAA) to phosphoenolpyruvate (PEP) through direct phosphoryl transfer between the nucleoside triphosphate and OAA. This Rhodopseudomonas palustris (strain BisA53) protein is Phosphoenolpyruvate carboxykinase (ATP).